Consider the following 43-residue polypeptide: Protein PsbN (43 aa).

Residues 7 to 27 (VTIFISGLLVSFTGYALYIAF) traverse the membrane as a helical segment.

The protein belongs to the PsbN family.

Its subcellular location is the plastid. It localises to the chloroplast thylakoid membrane. Its function is as follows. May play a role in photosystem I and II biogenesis. The chain is Protein PsbN from Dioscorea bulbifera (Air potato).